Here is a 347-residue protein sequence, read N- to C-terminus: S-adenosylmethionine:tRNA ribosyltransferase-isomerase (347 aa).

It belongs to the QueA family. Monomer.

It is found in the cytoplasm. It catalyses the reaction 7-aminomethyl-7-carbaguanosine(34) in tRNA + S-adenosyl-L-methionine = epoxyqueuosine(34) in tRNA + adenine + L-methionine + 2 H(+). It functions in the pathway tRNA modification; tRNA-queuosine biosynthesis. Its function is as follows. Transfers and isomerizes the ribose moiety from AdoMet to the 7-aminomethyl group of 7-deazaguanine (preQ1-tRNA) to give epoxyqueuosine (oQ-tRNA). The protein is S-adenosylmethionine:tRNA ribosyltransferase-isomerase of Xylella fastidiosa (strain M23).